The chain runs to 310 residues: Quinolinate synthase (310 aa).

Positions 27 and 44 each coordinate iminosuccinate. A [4Fe-4S] cluster-binding site is contributed by Cys-89. Iminosuccinate contacts are provided by residues 115–117 (YVN) and Ser-132. Cys-175 is a binding site for [4Fe-4S] cluster. Iminosuccinate-binding positions include 201–203 (HPE) and Thr-222. Cys-267 lines the [4Fe-4S] cluster pocket.

The protein belongs to the quinolinate synthase family. Type 2 subfamily. The cofactor is [4Fe-4S] cluster.

The protein resides in the cytoplasm. The enzyme catalyses iminosuccinate + dihydroxyacetone phosphate = quinolinate + phosphate + 2 H2O + H(+). Its pathway is cofactor biosynthesis; NAD(+) biosynthesis; quinolinate from iminoaspartate: step 1/1. Its function is as follows. Catalyzes the condensation of iminoaspartate with dihydroxyacetone phosphate to form quinolinate. The chain is Quinolinate synthase from Thermus thermophilus (strain ATCC BAA-163 / DSM 7039 / HB27).